Here is a 326-residue protein sequence, read N- to C-terminus: Vitamin B12 import system permease protein BtuC (326 aa).

9 consecutive transmembrane segments (helical) span residues 15–35, 61–81, 88–108, 112–132, 146–166, 184–204, 240–260, 274–294, and 302–322; these read WLLC…CAGE, LAVL…QALF, PGLL…VLLG, LPNW…TLIL, LLAG…AIYF, GGVD…LLWI, GWMV…GLVI, VLLP…DVVA, and ELPI…WLLL.

The protein belongs to the binding-protein-dependent transport system permease family. FecCD subfamily. The complex is composed of two ATP-binding proteins (BtuD), two transmembrane proteins (BtuC) and a solute-binding protein (BtuF).

It localises to the cell inner membrane. Functionally, part of the ABC transporter complex BtuCDF involved in vitamin B12 import. Involved in the translocation of the substrate across the membrane. The protein is Vitamin B12 import system permease protein BtuC of Escherichia coli O8 (strain IAI1).